Consider the following 443-residue polypeptide: Phosphoglucosamine mutase (443 aa).

The active-site Phosphoserine intermediate is the Ser103. 4 residues coordinate Mg(2+): Ser103, Asp244, Asp246, and Asp248. Ser103 is modified (phosphoserine).

Belongs to the phosphohexose mutase family. Mg(2+) serves as cofactor. In terms of processing, activated by phosphorylation.

The catalysed reaction is alpha-D-glucosamine 1-phosphate = D-glucosamine 6-phosphate. Functionally, catalyzes the conversion of glucosamine-6-phosphate to glucosamine-1-phosphate. The polypeptide is Phosphoglucosamine mutase (Pelagibacter ubique (strain HTCC1062)).